The chain runs to 1228 residues: DNA-directed RNA polymerase subunit beta'' (1228 aa).

Zn(2+)-binding residues include Cys-222, Cys-296, Cys-303, and Cys-306.

It belongs to the RNA polymerase beta' chain family. RpoC2 subfamily. In terms of assembly, in plastids the minimal PEP RNA polymerase catalytic core is composed of four subunits: alpha, beta, beta', and beta''. When a (nuclear-encoded) sigma factor is associated with the core the holoenzyme is formed, which can initiate transcription. The cofactor is Zn(2+).

It localises to the plastid. It is found in the chloroplast. The catalysed reaction is RNA(n) + a ribonucleoside 5'-triphosphate = RNA(n+1) + diphosphate. In terms of biological role, DNA-dependent RNA polymerase catalyzes the transcription of DNA into RNA using the four ribonucleoside triphosphates as substrates. The chain is DNA-directed RNA polymerase subunit beta'' from Gracilaria tenuistipitata var. liui (Red alga).